Here is a 238-residue protein sequence, read N- to C-terminus: Fibroblast growth factor-binding protein 1 (238 aa).

A signal peptide spans 1-20 (MRIHGLILLSFLLLAAQVLS). The segment at 25 to 61 (KTAKNVPDSTTEEDMSPSLGKARNKQRSRTSKSMTHG) is disordered. 3 disulfides stabilise this stretch: C71–C88, C97–C130, and C106–C142. An O-linked (GalNAc...) serine glycan is attached at S164. A sufficient for interaction with FGF2 and FGF2-induced effects region spans residues 197-238 (KDSECLEDPDVLTQRKTALEFCGESWSSFCTFFLNMLQATSC). Cystine bridges form between C201/C238 and C218/C226.

This sequence belongs to the fibroblast growth factor-binding protein family. In terms of assembly, found in a complex with FGFBP1, FGF1 and FGF2. Interacts with FGF1, FGF2, FGF7, FGF10, FGF22 and HSPG2. As to expression, expressed in gut, eye, thymus, skin, lung, tongue, Purkinje cells and cerebral chorioid plexus (at protein level).

It is found in the secreted. The protein resides in the extracellular space. It localises to the cell membrane. Functionally, acts as a carrier protein that release fibroblast-binding factors (FGFs) from the extracellular matrix (EM) storage and thus enhance the mitogenic activity of FGFs. Enhances FGF2 signaling during tissue repair, angiogenesis and in tumor growth. The protein is Fibroblast growth factor-binding protein 1 (Fgfbp1) of Rattus norvegicus (Rat).